The following is a 794-amino-acid chain: PAN2-PAN3 deadenylation complex subunit PAN3 (794 aa).

The C3H1-type zinc finger occupies 7–36; sequence SAKDVLCKNILIYGYCKFQDKGCAFSHNKQ. 2 disordered regions span residues 40–97 and 187–226; these read PQQQ…TQSK and AQVG…QQQL. Composition is skewed to polar residues over residues 83-94 and 189-199; these read IQSNGMVNSQET and VGNNPGSTAPA. Over residues 200-226 the composition is skewed to low complexity; that stretch reads NLQLQQKQPQQPQQPQQPQQHQQQQQL. The tract at residues 372–668 is pseudokinase domain; sequence QTMQHLSLPD…MDQFILQYIS (297 aa). Residues Arg425 and 494-501 each bind ATP; that span reads DYYPNLTT. Residues 669 to 707 are a coiled coil; that stretch reads SHFMTLMNKLQNSHDWVELQLSTELENARLFRLMTKINF. The segment at 708-794 is knob domain; the sequence is IISEMPTYDL…IDTQFRLLRG (87 aa).

The protein belongs to the protein kinase superfamily. PAN3 family. As to quaternary structure, homodimer. Forms a heterotrimer with a catalytic subunit PAN2 to form the poly(A)-nuclease (PAN) deadenylation complex. Interacts (via PAM-2 motif) with poly(A)-binding protein PAB1 (via PABC domain), conferring substrate specificity of the enzyme complex.

The protein resides in the cytoplasm. In terms of biological role, regulatory subunit of the poly(A)-nuclease (PAN) deadenylation complex, one of two cytoplasmic mRNA deadenylases involved in mRNA turnover. PAN specifically shortens poly(A) tails of RNA and the activity is stimulated by poly(A)-binding protein PAB1. PAN deadenylation is followed by rapid degradation of the shortened mRNA tails by the CCR4-NOT complex. Deadenylated mRNAs are then degraded by two alternative mechanisms, namely exosome-mediated 3'-5' exonucleolytic degradation, or deadenylation-dependent mRNA decaping and subsequent 5'-3' exonucleolytic degradation by XRN1. May also be involved in post-transcriptional maturation of mRNA poly(A) tails. PAN3 acts as a positive regulator for PAN activity, recruiting the catalytic subunit PAN2 to mRNA via its interaction with RNA and with PAB1. The chain is PAN2-PAN3 deadenylation complex subunit PAN3 from Lodderomyces elongisporus (strain ATCC 11503 / CBS 2605 / JCM 1781 / NBRC 1676 / NRRL YB-4239) (Yeast).